The primary structure comprises 250 residues: Putative B3 domain-containing protein At4g03170 (250 aa).

The segment covering 1–12 (MANSTGKPTSST) has biased composition (polar residues). Positions 1–90 (MANSTGKPTS…EKNQPKRFKK (90 aa)) are disordered. The segment covering 34–56 (DREEDIDDEDDIDDEVIDDEDYE) has biased composition (acidic residues). Positions 72–84 (QSREREEETEKNQ) are enriched in basic and acidic residues. Residues 137 to 245 (KKQLMSSDVD…KLCFAIHYVK (109 aa)) constitute a DNA-binding region (TF-B3).

Its subcellular location is the nucleus. This chain is Putative B3 domain-containing protein At4g03170, found in Arabidopsis thaliana (Mouse-ear cress).